A 187-amino-acid polypeptide reads, in one-letter code: Calcium and integrin-binding family member 2 (187 aa).

EF-hand domains lie at 66 to 101, 103 to 138, and 144 to 179; these read RENPFKERIVEAFSEDGEGNLTFNDFVDMFSVLCES, PRELKANYAFKIYDFNTDNFICKEDLELTLARLTKS, and EVVLVCDKVIEEADLDGDGKLGFADFEDMIAKAPDF. Positions 116, 118, 120, 127, 157, 159, 161, 163, and 168 each coordinate Ca(2+).

In terms of assembly, monomer. Homodimer. Interacts with WHRN and MYO7A. Interacts with ITGA2B (via C-terminus cytoplasmic tail region); the interactions are stabilized/increased in a calcium and magnesium-dependent manner. Interacts with ITGA7 (via C-terminus cytoplasmic tail region); the interactions are stabilized/increased in a calcium and magnesium-dependent manner. Interacts with TMC1. Interacts with TMC2.

The protein resides in the cytoplasm. Its subcellular location is the cell projection. The protein localises to the stereocilium. It is found in the photoreceptor inner segment. It localises to the cilium. The protein resides in the photoreceptor outer segment. Its subcellular location is the cell membrane. The protein localises to the sarcolemma. Calcium- and integrin-binding protein that plays a role in intracellular calcium homeostasis. Acts as an auxiliary subunit of the sensory mechanoelectrical transduction (MET) channel in hair cells. Essential for mechanoelectrical transduction (MET) currents in auditory hair cells and thereby required for hearing. Regulates the function of hair cell mechanotransduction by controlling the distribution of transmembrane channel-like proteins TMC1 and TMC2, and by regulating the function of the MET channels in hair cells. Required for the maintenance of auditory hair cell stereocilia bundle morphology and function and for hair-cell survival in the cochlea. Critical for proper photoreceptor cell maintenance and function. Plays a role in intracellular calcium homeostasis by decreasing ATP-induced calcium release. The sequence is that of Calcium and integrin-binding family member 2 (Cib2) from Rattus norvegicus (Rat).